The primary structure comprises 476 residues: MVATAAATAELQVAKDYVIADIGLADFGRKELNIAETEMPGLMALRAKYGKDKPLKGARIAGSLHMTIQTAVLIETLVELGADVRWASCNIFSTQDHAAAAMAAGGIPVFAVKGETLEEYWDYTHSILEWGDGGTPNMILDDGGDATGLVMLGSKAEQDITVLDNPSNEEETFLFASIKKKLAKDSSFYSRIKAEIQGVTEETTTGVARLYKMQKSGELPFPAINVNDSVTKSKFDNLYGCRESLVDSIKRATDVMVAGKQALVVGYGDVGKGSAQSLRGLGATVCIAEVDPICALQAAMEGYRVVRLEDVVDQMDIFVTATGNYQVIRNEHLVKMKDEAIVCNIGHFDNEIDVASLKSYEWDNIKPQVDHITLPSGNKIILLAEGRLVNLGCATGHPSFVMSNSFTNQVLAQIELFTKGSEYGKEVYVLPKHLDEMVARLHLEKIGCKLTELSKDQADYINVPVEGPYKPDHYRY.

Positions 67, 142, and 202 each coordinate substrate. 203–205 contacts NAD(+); the sequence is TTT. Substrate-binding residues include Lys232 and Asp236. NAD(+)-binding positions include Asn237, 266–271, Glu289, Asn324, 345–347, and Asn390; these read GYGDVG and IGH.

This sequence belongs to the adenosylhomocysteinase family. It depends on NAD(+) as a cofactor.

The protein resides in the cytoplasm. The enzyme catalyses S-adenosyl-L-homocysteine + H2O = L-homocysteine + adenosine. Its pathway is amino-acid biosynthesis; L-homocysteine biosynthesis; L-homocysteine from S-adenosyl-L-homocysteine: step 1/1. Functionally, may play a key role in the regulation of the intracellular concentration of adenosylhomocysteine. The polypeptide is Adenosylhomocysteinase (Synechococcus sp. (strain CC9311)).